The sequence spans 105 residues: Large ribosomal subunit protein uL24 (105 aa).

The protein belongs to the universal ribosomal protein uL24 family. As to quaternary structure, part of the 50S ribosomal subunit.

In terms of biological role, one of two assembly initiator proteins, it binds directly to the 5'-end of the 23S rRNA, where it nucleates assembly of the 50S subunit. Functionally, one of the proteins that surrounds the polypeptide exit tunnel on the outside of the subunit. The polypeptide is Large ribosomal subunit protein uL24 (Thermotoga maritima (strain ATCC 43589 / DSM 3109 / JCM 10099 / NBRC 100826 / MSB8)).